Here is a 185-residue protein sequence, read N- to C-terminus: Large ribosomal subunit protein uL5 (185 aa).

This sequence belongs to the universal ribosomal protein uL5 family. In terms of assembly, part of the 50S ribosomal subunit; part of the 5S rRNA/L5/L18/L25 subcomplex. Contacts the 5S rRNA and the P site tRNA. Forms a bridge to the 30S subunit in the 70S ribosome.

In terms of biological role, this is one of the proteins that bind and probably mediate the attachment of the 5S RNA into the large ribosomal subunit, where it forms part of the central protuberance. In the 70S ribosome it contacts protein S13 of the 30S subunit (bridge B1b), connecting the 2 subunits; this bridge is implicated in subunit movement. Contacts the P site tRNA; the 5S rRNA and some of its associated proteins might help stabilize positioning of ribosome-bound tRNAs. In Bradyrhizobium sp. (strain ORS 278), this protein is Large ribosomal subunit protein uL5.